The sequence spans 374 residues: Queuine tRNA-ribosyltransferase (374 aa).

Asp-89 functions as the Proton acceptor in the catalytic mechanism. Substrate-binding positions include 89–93 (DSGGF), Asp-143, Gln-185, and Gly-212. The RNA binding stretch occupies residues 243-249 (GVGKPED). The active-site Nucleophile is Asp-262. Residues 267–271 (TRNAR) form an RNA binding; important for wobble base 34 recognition region. Zn(2+) contacts are provided by Cys-300, Cys-302, Cys-305, and His-331.

It belongs to the queuine tRNA-ribosyltransferase family. In terms of assembly, homodimer. Within each dimer, one monomer is responsible for RNA recognition and catalysis, while the other monomer binds to the replacement base PreQ1. Zn(2+) serves as cofactor.

The catalysed reaction is 7-aminomethyl-7-carbaguanine + guanosine(34) in tRNA = 7-aminomethyl-7-carbaguanosine(34) in tRNA + guanine. The protein operates within tRNA modification; tRNA-queuosine biosynthesis. Functionally, catalyzes the base-exchange of a guanine (G) residue with the queuine precursor 7-aminomethyl-7-deazaguanine (PreQ1) at position 34 (anticodon wobble position) in tRNAs with GU(N) anticodons (tRNA-Asp, -Asn, -His and -Tyr). Catalysis occurs through a double-displacement mechanism. The nucleophile active site attacks the C1' of nucleotide 34 to detach the guanine base from the RNA, forming a covalent enzyme-RNA intermediate. The proton acceptor active site deprotonates the incoming PreQ1, allowing a nucleophilic attack on the C1' of the ribose to form the product. After dissociation, two additional enzymatic reactions on the tRNA convert PreQ1 to queuine (Q), resulting in the hypermodified nucleoside queuosine (7-(((4,5-cis-dihydroxy-2-cyclopenten-1-yl)amino)methyl)-7-deazaguanosine). The sequence is that of Queuine tRNA-ribosyltransferase from Saccharophagus degradans (strain 2-40 / ATCC 43961 / DSM 17024).